The chain runs to 477 residues: Erythritol/L-threitol-binding protein (477 aa).

Positions 1-38 form a signal peptide, tat-type signal; that stretch reads MMSRESQPGLHRQLSRRNMLAAMGLAGAAAVSLPVLSA.

The protein belongs to the bacterial solute-binding protein 1 family. Post-translationally, predicted to be exported by the Tat system. The position of the signal peptide cleavage has not been experimentally proven.

Its function is as follows. Part of an ABC transporter complex involved in erythritol/L-threitol import. Binds erythritol and L-threitol. Functions in the transport for the degradation pathways of erythritol and L-threitol, that allow M.smegmatis to grow on these compounds as the sole carbon source. The chain is Erythritol/L-threitol-binding protein from Mycolicibacterium smegmatis (strain ATCC 700084 / mc(2)155) (Mycobacterium smegmatis).